Consider the following 108-residue polypeptide: uncharacterized protein (108 aa).

Residues 20–74 (VRQRRTALILDQETLARRIGVSFQQIQKYERGRNRISASRLYDIAKALAVPIDYF) form the HTH cro/C1-type domain. Residues 31–50 (QETLARRIGVSFQQIQKYER) constitute a DNA-binding region (H-T-H motif).

This is an uncharacterized protein from Rhodospirillum rubrum.